We begin with the raw amino-acid sequence, 122 residues long: Small ribosomal subunit protein uS13 (122 aa).

Positions 93 to 122 are disordered; that stretch reads RLSLPVRGQRTKTNSRTRKGKRKTVAGKKK. A compositionally biased stretch (basic residues) spans 101 to 122; the sequence is QRTKTNSRTRKGKRKTVAGKKK.

This sequence belongs to the universal ribosomal protein uS13 family. Part of the 30S ribosomal subunit. Forms a loose heterodimer with protein S19. Forms two bridges to the 50S subunit in the 70S ribosome.

Its function is as follows. Located at the top of the head of the 30S subunit, it contacts several helices of the 16S rRNA. In the 70S ribosome it contacts the 23S rRNA (bridge B1a) and protein L5 of the 50S subunit (bridge B1b), connecting the 2 subunits; these bridges are implicated in subunit movement. Contacts the tRNAs in the A and P-sites. The polypeptide is Small ribosomal subunit protein uS13 (Chlamydia abortus (strain DSM 27085 / S26/3) (Chlamydophila abortus)).